The chain runs to 310 residues: ATP phosphoribosyltransferase (310 aa).

This sequence belongs to the ATP phosphoribosyltransferase family.

The protein resides in the cytoplasm. The catalysed reaction is 1-(5-phospho-beta-D-ribosyl)-ATP + diphosphate = 5-phospho-alpha-D-ribose 1-diphosphate + ATP. The protein operates within amino-acid biosynthesis; L-histidine biosynthesis; L-histidine from 5-phospho-alpha-D-ribose 1-diphosphate: step 1/9. Catalyzes the condensation of ATP and 5-phosphoribose 1-diphosphate to form N'-(5'-phosphoribosyl)-ATP (PR-ATP). Has a crucial role in the pathway because the rate of histidine biosynthesis seems to be controlled primarily by regulation of HisG enzymatic activity. This chain is ATP phosphoribosyltransferase (his1), found in Schizosaccharomyces pombe (strain 972 / ATCC 24843) (Fission yeast).